We begin with the raw amino-acid sequence, 491 residues long: 3-octaprenyl-4-hydroxybenzoate carboxy-lyase (491 aa).

Position 172 (asparagine 172) interacts with Mn(2+). Residues 175 to 177 (IYR), 189 to 191 (RWL), and 194 to 195 (RG) contribute to the prenylated FMN site. Glutamate 238 contacts Mn(2+). The active-site Proton donor is the aspartate 287.

This sequence belongs to the UbiD family. Homohexamer. Prenylated FMN is required as a cofactor. The cofactor is Mn(2+).

The protein localises to the cell membrane. The catalysed reaction is a 4-hydroxy-3-(all-trans-polyprenyl)benzoate + H(+) = a 2-(all-trans-polyprenyl)phenol + CO2. The protein operates within cofactor biosynthesis; ubiquinone biosynthesis. Its function is as follows. Catalyzes the decarboxylation of 3-octaprenyl-4-hydroxy benzoate to 2-octaprenylphenol, an intermediate step in ubiquinone biosynthesis. The polypeptide is 3-octaprenyl-4-hydroxybenzoate carboxy-lyase (Histophilus somni (strain 2336) (Haemophilus somnus)).